Reading from the N-terminus, the 471-residue chain is Cysteine--tRNA ligase (471 aa).

C29 is a Zn(2+) binding site. Positions 31–41 (PTVYNYIHIGN) match the 'HIGH' region motif. C209, H234, and E238 together coordinate Zn(2+). The short motif at 266–270 (KMSKS) is the 'KMSKS' region element. An ATP-binding site is contributed by K269.

Belongs to the class-I aminoacyl-tRNA synthetase family. Monomer. Requires Zn(2+) as cofactor.

It is found in the cytoplasm. The catalysed reaction is tRNA(Cys) + L-cysteine + ATP = L-cysteinyl-tRNA(Cys) + AMP + diphosphate. This is Cysteine--tRNA ligase from Listeria welshimeri serovar 6b (strain ATCC 35897 / DSM 20650 / CCUG 15529 / CIP 8149 / NCTC 11857 / SLCC 5334 / V8).